Reading from the N-terminus, the 351-residue chain is tRNA pseudouridine synthase D (351 aa).

Aspartate 81 functions as the Nucleophile in the catalytic mechanism. The region spanning 158 to 304 is the TRUD domain; the sequence is GVPNYFGSQR…MRHERRAIEL (147 aa).

This sequence belongs to the pseudouridine synthase TruD family.

The catalysed reaction is uridine(13) in tRNA = pseudouridine(13) in tRNA. Functionally, responsible for synthesis of pseudouridine from uracil-13 in transfer RNAs. This chain is tRNA pseudouridine synthase D, found in Aliivibrio fischeri (strain ATCC 700601 / ES114) (Vibrio fischeri).